Reading from the N-terminus, the 1146-residue chain is uncharacterized protein (1146 aa).

This is an uncharacterized protein from Saccharum officinarum (Sugarcane).